Here is a 601-residue protein sequence, read N- to C-terminus: DNA ligase (601 aa).

Residue D258 participates in ATP binding. Residue K260 is the N6-AMP-lysine intermediate of the active site. ATP contacts are provided by R265, R280, E310, F350, R427, and K433. The segment at 568–601 (DKSPEDATTTDEILEMYNKQPKKKIESPPIDESV) is disordered.

The protein belongs to the ATP-dependent DNA ligase family. The cofactor is Mg(2+).

It catalyses the reaction ATP + (deoxyribonucleotide)n-3'-hydroxyl + 5'-phospho-(deoxyribonucleotide)m = (deoxyribonucleotide)n+m + AMP + diphosphate.. DNA ligase that seals nicks in double-stranded DNA during DNA replication, DNA recombination and DNA repair. This chain is DNA ligase, found in Saccharolobus islandicus (strain L.S.2.15 / Lassen #1) (Sulfolobus islandicus).